We begin with the raw amino-acid sequence, 419 residues long: Farnesyl pyrophosphate synthase (419 aa).

Methionine 1 is subject to N-acetylmethionine. Residues lysine 123, arginine 126, and glutamine 162 each coordinate isopentenyl diphosphate. Lysine 123 bears the N6-(2-hydroxyisobutyryl)lysine; alternate mark. At lysine 123 the chain carries N6-acetyllysine; alternate. Residues aspartate 169 and aspartate 173 each coordinate Mg(2+). Dimethylallyl diphosphate is bound at residue arginine 178. An isopentenyl diphosphate-binding site is contributed by arginine 179. Positions 266, 267, 306, 323, and 332 each coordinate dimethylallyl diphosphate. Lysine 353 carries the post-translational modification N6-acetyllysine.

It belongs to the FPP/GGPP synthase family. In terms of assembly, homodimer. Interacts with RSAD2. (Microbial infection) Interacts with HTLV-1 protein p13(II). The cofactor is Mg(2+).

Its subcellular location is the cytoplasm. It carries out the reaction isopentenyl diphosphate + dimethylallyl diphosphate = (2E)-geranyl diphosphate + diphosphate. The enzyme catalyses isopentenyl diphosphate + (2E)-geranyl diphosphate = (2E,6E)-farnesyl diphosphate + diphosphate. It functions in the pathway isoprenoid biosynthesis; farnesyl diphosphate biosynthesis; farnesyl diphosphate from geranyl diphosphate and isopentenyl diphosphate: step 1/1. It participates in isoprenoid biosynthesis; geranyl diphosphate biosynthesis; geranyl diphosphate from dimethylallyl diphosphate and isopentenyl diphosphate: step 1/1. Inactivated by interferon-induced RSAD2. This inactivation may result of disruption of lipid rafts at the plasma membrane, and thus have an antiviral effect since many enveloped viruses need lipid rafts to bud efficiently out of the cell. Key enzyme in isoprenoid biosynthesis which catalyzes the formation of farnesyl diphosphate (FPP), a precursor for several classes of essential metabolites including sterols, dolichols, carotenoids, and ubiquinones. FPP also serves as substrate for protein farnesylation and geranylgeranylation. Catalyzes the sequential condensation of isopentenyl pyrophosphate with the allylic pyrophosphates, dimethylallyl pyrophosphate, and then with the resultant geranylpyrophosphate to the ultimate product farnesyl pyrophosphate. In Homo sapiens (Human), this protein is Farnesyl pyrophosphate synthase.